The chain runs to 322 residues: Aspartate carbamoyltransferase catalytic subunit (322 aa).

Carbamoyl phosphate is bound by residues arginine 70 and threonine 71. Lysine 98 lines the L-aspartate pocket. The carbamoyl phosphate site is built by arginine 120, histidine 150, and glutamine 153. Residues arginine 184 and arginine 239 each coordinate L-aspartate. Carbamoyl phosphate is bound by residues glycine 280 and proline 281.

The protein belongs to the aspartate/ornithine carbamoyltransferase superfamily. ATCase family. In terms of assembly, heterododecamer (2C3:3R2) of six catalytic PyrB chains organized as two trimers (C3), and six regulatory PyrI chains organized as three dimers (R2).

It carries out the reaction carbamoyl phosphate + L-aspartate = N-carbamoyl-L-aspartate + phosphate + H(+). The protein operates within pyrimidine metabolism; UMP biosynthesis via de novo pathway; (S)-dihydroorotate from bicarbonate: step 2/3. Catalyzes the condensation of carbamoyl phosphate and aspartate to form carbamoyl aspartate and inorganic phosphate, the committed step in the de novo pyrimidine nucleotide biosynthesis pathway. This is Aspartate carbamoyltransferase catalytic subunit from Xylella fastidiosa (strain 9a5c).